Here is a 360-residue protein sequence, read N- to C-terminus: Phospho-N-acetylmuramoyl-pentapeptide-transferase (360 aa).

10 consecutive transmembrane segments (helical) span residues 27–47, 73–93, 94–114, 132–152, 168–188, 199–219, 236–256, 263–283, 288–308, and 338–358; these read IVSL…MIAW, TMGG…WANL, SNPY…VGFV, WKYF…YSIG, VMPQ…VGTS, GLAI…AWAT, ASEL…FLWF, VFMG…IAVL, FLLV…ILQV, and VIVR…ATLK.

The protein belongs to the glycosyltransferase 4 family. MraY subfamily. Mg(2+) is required as a cofactor.

The protein localises to the cell inner membrane. The enzyme catalyses UDP-N-acetyl-alpha-D-muramoyl-L-alanyl-gamma-D-glutamyl-meso-2,6-diaminopimeloyl-D-alanyl-D-alanine + di-trans,octa-cis-undecaprenyl phosphate = di-trans,octa-cis-undecaprenyl diphospho-N-acetyl-alpha-D-muramoyl-L-alanyl-D-glutamyl-meso-2,6-diaminopimeloyl-D-alanyl-D-alanine + UMP. It functions in the pathway cell wall biogenesis; peptidoglycan biosynthesis. Functionally, catalyzes the initial step of the lipid cycle reactions in the biosynthesis of the cell wall peptidoglycan: transfers peptidoglycan precursor phospho-MurNAc-pentapeptide from UDP-MurNAc-pentapeptide onto the lipid carrier undecaprenyl phosphate, yielding undecaprenyl-pyrophosphoryl-MurNAc-pentapeptide, known as lipid I. In Pectobacterium atrosepticum (strain SCRI 1043 / ATCC BAA-672) (Erwinia carotovora subsp. atroseptica), this protein is Phospho-N-acetylmuramoyl-pentapeptide-transferase.